A 276-amino-acid chain; its full sequence is NH(3)-dependent NAD(+) synthetase (276 aa).

Residue 46 to 53 (GISGGQDS) coordinates ATP. Residue Asp52 coordinates Mg(2+). Arg141 serves as a coordination point for deamido-NAD(+). An ATP-binding site is contributed by Thr161. Mg(2+) is bound at residue Glu166. The deamido-NAD(+) site is built by Lys174 and Asp181. Positions 190 and 212 each coordinate ATP. Residue 261-262 (HK) coordinates deamido-NAD(+).

The protein belongs to the NAD synthetase family. In terms of assembly, homodimer.

It carries out the reaction deamido-NAD(+) + NH4(+) + ATP = AMP + diphosphate + NAD(+) + H(+). It participates in cofactor biosynthesis; NAD(+) biosynthesis; NAD(+) from deamido-NAD(+) (ammonia route): step 1/1. Functionally, catalyzes the ATP-dependent amidation of deamido-NAD to form NAD. Uses ammonia as a nitrogen source. In Limosilactobacillus fermentum (strain NBRC 3956 / LMG 18251) (Lactobacillus fermentum), this protein is NH(3)-dependent NAD(+) synthetase.